We begin with the raw amino-acid sequence, 238 residues long: MSDLQNQMKQAVADAAVQQFRDGMVVGLGSGSTAALMIKGLGERLAAGQLSDIVGVTTSFQGEVLAAELGIPLRSLNAVDRIDLAIDGADEVDPAFQLIKGGGACHVQEKLVAARADRFIVVVDSTKLVERLNLGFLLPVEVLPGAWVQISQQLKAMGGDAELRMATRKAGPVVTDQGNLVLDVRFEGGIADPASLEKEINNIPGVLENGLFVNLADEVLVGQIDGGVASARSLEKAG.

Residues Ser30 to Thr33, Asp87 to Asp90, and Lys100 to Gly103 contribute to the substrate site. Glu109 (proton acceptor) is an active-site residue. A substrate-binding site is contributed by Lys127.

It belongs to the ribose 5-phosphate isomerase family. In terms of assembly, homodimer.

It carries out the reaction aldehydo-D-ribose 5-phosphate = D-ribulose 5-phosphate. The protein operates within carbohydrate degradation; pentose phosphate pathway; D-ribose 5-phosphate from D-ribulose 5-phosphate (non-oxidative stage): step 1/1. Catalyzes the reversible conversion of ribose-5-phosphate to ribulose 5-phosphate. The sequence is that of Ribose-5-phosphate isomerase A from Synechococcus sp. (strain WH7803).